We begin with the raw amino-acid sequence, 253 residues long: Sulfate transporter CysZ (253 aa).

The next 4 membrane-spanning stretches (helical) occupy residues phenylalanine 31–phenylalanine 51, leucine 75–isoleucine 95, isoleucine 151–tryptophan 171, and isoleucine 222–valine 242.

Belongs to the CysZ family.

The protein localises to the cell inner membrane. Its function is as follows. High affinity, high specificity proton-dependent sulfate transporter, which mediates sulfate uptake. Provides the sulfur source for the cysteine synthesis pathway. The chain is Sulfate transporter CysZ from Shigella flexneri serotype 5b (strain 8401).